We begin with the raw amino-acid sequence, 616 residues long: Adenylosuccinate synthetase 2 (616 aa).

The tract at residues 1–26 (MDKQAERDQSAGPVKTPQETQPPAHN) is disordered. Positions 17–26 (PQETQPPAHN) are enriched in polar residues. Residues 87 to 93 (GDEGKGK) and 117 to 119 (GHT) each bind GTP. D88 (proton acceptor) is an active-site residue. Mg(2+) is bound by residues D88 and G117. IMP is bound by residues 88–91 (DEGK), 115–118 (NAGH), T202, K216, Q328, T343, and K472. H118 serves as the catalytic Proton donor. 468 to 474 (AVTKKPR) is a binding site for substrate. GTP contacts are provided by residues R474 and 603-605 (GNG).

It belongs to the adenylosuccinate synthetase family. As to quaternary structure, homodimer. Requires Mg(2+) as cofactor.

Its subcellular location is the cytoplasm. The catalysed reaction is IMP + L-aspartate + GTP = N(6)-(1,2-dicarboxyethyl)-AMP + GDP + phosphate + 2 H(+). The protein operates within purine metabolism; AMP biosynthesis via de novo pathway; AMP from IMP: step 1/2. Its function is as follows. Plays an important role in the salvage pathway for purine nucleotide biosynthesis. Catalyzes the first committed step in the biosynthesis of AMP from IMP. The chain is Adenylosuccinate synthetase 2 from Trypanosoma cruzi (strain CL Brener).